We begin with the raw amino-acid sequence, 192 residues long: uncharacterized protein (192 aa).

Positions 1–24 (MSGVLSCVLRACACAGLCCWVCMG) are cleaved as a signal peptide. The interval 140 to 192 (RAGADEGAGGNAAGCPEDTRGFARSPGDLMGGMNGDLGDEGETGEGGDNGAGE) is disordered.

This is an uncharacterized protein from Human herpesvirus 6A (strain Uganda-1102) (HHV-6 variant A).